The chain runs to 160 residues: NADH-quinone oxidoreductase subunit B (160 aa).

C37, C38, C102, and C132 together coordinate [4Fe-4S] cluster.

It belongs to the complex I 20 kDa subunit family. NDH-1 is composed of 14 different subunits. Subunits NuoB, C, D, E, F, and G constitute the peripheral sector of the complex. [4Fe-4S] cluster serves as cofactor.

Its subcellular location is the cell inner membrane. The enzyme catalyses a quinone + NADH + 5 H(+)(in) = a quinol + NAD(+) + 4 H(+)(out). In terms of biological role, NDH-1 shuttles electrons from NADH, via FMN and iron-sulfur (Fe-S) centers, to quinones in the respiratory chain. Couples the redox reaction to proton translocation (for every two electrons transferred, four hydrogen ions are translocated across the cytoplasmic membrane), and thus conserves the redox energy in a proton gradient. The protein is NADH-quinone oxidoreductase subunit B of Neisseria gonorrhoeae (strain NCCP11945).